We begin with the raw amino-acid sequence, 84 residues long: Cytochrome b559 subunit alpha (84 aa).

Residues 22–36 (IIHSITIPSLFVAGF) form a helical membrane-spanning segment. His-24 is a heme binding site.

Belongs to the PsbE/PsbF family. As to quaternary structure, heterodimer of an alpha subunit and a beta subunit. PSII is composed of 1 copy each of membrane proteins PsbA, PsbB, PsbC, PsbD, PsbE, PsbF, PsbH, PsbI, PsbJ, PsbK, PsbL, PsbM, PsbT, PsbX, PsbY, PsbZ, Psb30/Ycf12, at least 3 peripheral proteins of the oxygen-evolving complex and a large number of cofactors. It forms dimeric complexes. Requires heme b as cofactor.

It is found in the plastid. The protein localises to the chloroplast thylakoid membrane. This b-type cytochrome is tightly associated with the reaction center of photosystem II (PSII). PSII is a light-driven water:plastoquinone oxidoreductase that uses light energy to abstract electrons from H(2)O, generating O(2) and a proton gradient subsequently used for ATP formation. It consists of a core antenna complex that captures photons, and an electron transfer chain that converts photonic excitation into a charge separation. This Emiliania huxleyi (Coccolithophore) protein is Cytochrome b559 subunit alpha.